The chain runs to 397 residues: Putative nickel insertion protein (397 aa).

Belongs to the LarC family.

In Synechococcus sp. (strain JA-3-3Ab) (Cyanobacteria bacterium Yellowstone A-Prime), this protein is Putative nickel insertion protein.